The primary structure comprises 265 residues: MDVYGLIGNPVGHSLSPPMHEAGYEALGLDARYVTFEPPADAGAEAIEAAETLGVDGLNVTIPFKQDVLDAVDPAPLAERIGAVNTVDFTGGTPTGYNTDAVGAVRALDHHDVSLSGTAVVVGAGGAGRAVAFGLADEGLSVRIANRTESKADALADEVPDASGHGLDSLSDLLANADILVNCTSVGMEEDKTPVPADALHSDLAVLDAVYTPIETRLLQDAAAAGATTVDGAWMLLYQGVEAFERWTGEDAPVDRMNGRLREHL.

Shikimate-binding positions include 14 to 16 (SLS) and Thr61. Catalysis depends on Lys65, which acts as the Proton acceptor. Shikimate-binding residues include Asn85 and Asp100. Residues 123–127 (GAGGA), 146–151 (NRTESK), and Ala209 contribute to the NADP(+) site. Position 211 (Tyr211) interacts with shikimate. Residue Gly232 coordinates NADP(+).

This sequence belongs to the shikimate dehydrogenase family. As to quaternary structure, homodimer.

The catalysed reaction is shikimate + NADP(+) = 3-dehydroshikimate + NADPH + H(+). It functions in the pathway metabolic intermediate biosynthesis; chorismate biosynthesis; chorismate from D-erythrose 4-phosphate and phosphoenolpyruvate: step 4/7. Involved in the biosynthesis of the chorismate, which leads to the biosynthesis of aromatic amino acids. Catalyzes the reversible NADPH linked reduction of 3-dehydroshikimate (DHSA) to yield shikimate (SA). The chain is Shikimate dehydrogenase (NADP(+)) from Haloarcula marismortui (strain ATCC 43049 / DSM 3752 / JCM 8966 / VKM B-1809) (Halobacterium marismortui).